Here is a 447-residue protein sequence, read N- to C-terminus: Na(+)-translocating NADH-quinone reductase subunit A (447 aa).

It belongs to the NqrA family. In terms of assembly, composed of six subunits; NqrA, NqrB, NqrC, NqrD, NqrE and NqrF.

The enzyme catalyses a ubiquinone + n Na(+)(in) + NADH + H(+) = a ubiquinol + n Na(+)(out) + NAD(+). Its function is as follows. NQR complex catalyzes the reduction of ubiquinone-1 to ubiquinol by two successive reactions, coupled with the transport of Na(+) ions from the cytoplasm to the periplasm. NqrA to NqrE are probably involved in the second step, the conversion of ubisemiquinone to ubiquinol. This chain is Na(+)-translocating NADH-quinone reductase subunit A, found in Haemophilus influenzae (strain PittEE).